The sequence spans 230 residues: uncharacterized protein (230 aa).

In terms of domain architecture, HTH gntR-type spans 12–80 (KNLSYVLAEK…PRIGTRVMPQ (69 aa)). Residues 40–59 (EIELGEQFGVSRTAVREAVK) constitute a DNA-binding region (H-T-H motif).

This is an uncharacterized protein from Escherichia coli (strain K12).